Here is a 367-residue protein sequence, read N- to C-terminus: Glutamate 5-kinase (367 aa).

Residue Lys9 coordinates ATP. Substrate is bound by residues Ser49, Asp136, and Asn148. ATP contacts are provided by residues 168–169 (TD) and 210–216 (TGGMKSK). Positions 276 to 350 (SGQIEVDAGA…GMQSQDIQAR (75 aa)) constitute a PUA domain.

The protein belongs to the glutamate 5-kinase family.

The protein localises to the cytoplasm. The catalysed reaction is L-glutamate + ATP = L-glutamyl 5-phosphate + ADP. It functions in the pathway amino-acid biosynthesis; L-proline biosynthesis; L-glutamate 5-semialdehyde from L-glutamate: step 1/2. Its function is as follows. Catalyzes the transfer of a phosphate group to glutamate to form L-glutamate 5-phosphate. The sequence is that of Glutamate 5-kinase from Bacillus mycoides (strain KBAB4) (Bacillus weihenstephanensis).